Consider the following 352-residue polypeptide: MDYQVSSPTYDIDYYTSEPCQKVNVKQIAARLLPPLYSLVFIFGFVGNILVVLILINCKRLKSMTDIYLLNLAISDLFFLLTVPFWAHYAAARWDFGNTMCQLLTGLYFIGFFSGIFFIILLTIDRYLAIVHAVFALKARTVTFGVVTSVITWVVAVFASLPGIIFTRSQREGLHYTCSSHFPYSQYQFWKNFQTLKIVILGLVLPLLVMVICYSGILKTLLRCRNEKKRHRAVRLIFTIMIVYFLFWAPYNIVLLLNTFQEFFGLNNCSSSNRLDQAMQVTETLGMTHCCINPIIYAFVGEKFRNYLLVFFQKHIAKRFCKCCSIFQQEAPERASSVYTRSTGEQEISVGL.

At 1–30 (MDYQVSSPTYDIDYYTSEPCQKVNVKQIAA) the chain is on the extracellular side. Tyrosine 3 carries the sulfotyrosine modification. O-linked (GalNAc...) serine glycans are attached at residues serine 6 and serine 7. Sulfotyrosine is present on residues tyrosine 10, tyrosine 14, and tyrosine 15. 2 disulfides stabilise this stretch: cysteine 20–cysteine 269 and cysteine 101–cysteine 178. Residues 31–58 (RLLPPLYSLVFIFGFVGNILVVLILINC) traverse the membrane as a helical segment. The Cytoplasmic portion of the chain corresponds to 59–68 (KRLKSMTDIY). Residues 69-89 (LLNLAISDLFFLLTVPFWAHY) form a helical membrane-spanning segment. At 90-102 (AAARWDFGNTMCQ) the chain is on the extracellular side. The helical transmembrane segment at 103-124 (LLTGLYFIGFFSGIFFIILLTI) threads the bilayer. Residues 125 to 141 (DRYLAIVHAVFALKART) lie on the Cytoplasmic side of the membrane. A helical membrane pass occupies residues 142 to 166 (VTFGVVTSVITWVVAVFASLPGIIF). Over 167–198 (TRSQREGLHYTCSSHFPYSQYQFWKNFQTLKI) the chain is Extracellular. The chain crosses the membrane as a helical span at residues 199–218 (VILGLVLPLLVMVICYSGIL). Residues 219–235 (KTLLRCRNEKKRHRAVR) lie on the Cytoplasmic side of the membrane. The chain crosses the membrane as a helical span at residues 236–260 (LIFTIMIVYFLFWAPYNIVLLLNTF). Residues 261 to 277 (QEFFGLNNCSSSNRLDQ) lie on the Extracellular side of the membrane. Residues 278-301 (AMQVTETLGMTHCCINPIIYAFVG) traverse the membrane as a helical segment. The Cytoplasmic segment spans residues 302 to 352 (EKFRNYLLVFFQKHIAKRFCKCCSIFQQEAPERASSVYTRSTGEQEISVGL). 3 S-palmitoyl cysteine lipidation sites follow: cysteine 321, cysteine 323, and cysteine 324. Residues serine 336, serine 337, serine 342, and serine 349 each carry the phosphoserine; by BARK1 modification.

The protein belongs to the G-protein coupled receptor 1 family. As to quaternary structure, interacts with PRAF2. Efficient ligand binding to CCL3/MIP-1alpha and CCL4/MIP-1beta requires sulfation, O-glycosylation and sialic acid modifications. Glycosylation on Ser-6 is required for efficient binding of CCL4. Interacts with GRK2. Interacts with ARRB1 and ARRB2. Interacts with CNIH4. Interacts with S100A4; this interaction stimulates T-lymphocyte chemotaxis. Post-translationally, sulfated on at least 2 of the N-terminal tyrosines. Sulfation is required for efficient binding of the chemokines, CCL3 and CCL4. Palmitoylation in the C-terminal is important for cell surface expression. In terms of processing, phosphorylation on serine residues in the C-terminal is stimulated by binding CC chemokines especially by APO-RANTES. Post-translationally, O-glycosylated, but not N-glycosylated. Ser-6 appears to be the major site even if Ser-7 may be also O-glycosylated. Also sialylated glycans present which contribute to chemokine binding. Thr-16 and Ser-17 may also be glycosylated and, if so, with small moieties such as a T-antigen.

It localises to the cell membrane. Receptor for a number of inflammatory CC-chemokines including CCL3/MIP-1-alpha, CCL4/MIP-1-beta and RANTES and subsequently transduces a signal by increasing the intracellular calcium ion level. May play a role in the control of granulocytic lineage proliferation or differentiation. Participates in T-lymphocyte migration to the infection site by acting as a chemotactic receptor. The protein is C-C chemokine receptor type 5 (CCR5) of Nasalis larvatus (Proboscis monkey).